A 136-amino-acid chain; its full sequence is Large ribosomal subunit protein uL16 (136 aa).

This sequence belongs to the universal ribosomal protein uL16 family. Part of the 50S ribosomal subunit.

Functionally, binds 23S rRNA and is also seen to make contacts with the A and possibly P site tRNAs. The chain is Large ribosomal subunit protein uL16 from Shewanella denitrificans (strain OS217 / ATCC BAA-1090 / DSM 15013).